A 134-amino-acid chain; its full sequence is MSPVHRSRTSQTQEAHKPTSTLSFISPPQPPRQDPKSPHILCSQPNACSRQSHVSYPNPWGLPCSQSKVSPPGTATNPNPKEWSRISGPPVSLDPQPWSSAPFKPTAQLPLLAQSLGPPAKPALPDPALPLQML.

The interval 1–134 is disordered; it reads MSPVHRSRTS…PDPALPLQML (134 aa). Composition is skewed to polar residues over residues 9 to 24, 43 to 55, and 64 to 79; these read TSQTQEAHKPTSTLSF, SQPNACSRQSHVS, and CSQSKVSPPGTATNPN. Positions 119-128 are enriched in pro residues; that stretch reads PAKPALPDPA.

Abundant expression is found in prostate, restricted to cells of epithelial origin in normal and diseased glands. Very low expression is detected in pancreas and ovary.

Its subcellular location is the cytoplasm. It is found in the nucleus. The protein is Putative protein KRIP1 (KLKP1) of Homo sapiens (Human).